Reading from the N-terminus, the 258-residue chain is Imidazole glycerol phosphate synthase subunit HisF (258 aa).

Active-site residues include aspartate 11 and aspartate 130.

This sequence belongs to the HisA/HisF family. In terms of assembly, heterodimer of HisH and HisF.

Its subcellular location is the cytoplasm. It carries out the reaction 5-[(5-phospho-1-deoxy-D-ribulos-1-ylimino)methylamino]-1-(5-phospho-beta-D-ribosyl)imidazole-4-carboxamide + L-glutamine = D-erythro-1-(imidazol-4-yl)glycerol 3-phosphate + 5-amino-1-(5-phospho-beta-D-ribosyl)imidazole-4-carboxamide + L-glutamate + H(+). Its pathway is amino-acid biosynthesis; L-histidine biosynthesis; L-histidine from 5-phospho-alpha-D-ribose 1-diphosphate: step 5/9. IGPS catalyzes the conversion of PRFAR and glutamine to IGP, AICAR and glutamate. The HisF subunit catalyzes the cyclization activity that produces IGP and AICAR from PRFAR using the ammonia provided by the HisH subunit. The polypeptide is Imidazole glycerol phosphate synthase subunit HisF (Enterobacter sp. (strain 638)).